We begin with the raw amino-acid sequence, 144 residues long: Large ribosomal subunit protein uL15 (144 aa).

Over residues 1-12 (MRLNTLSPSLGS) the composition is skewed to polar residues. The segment at 1–51 (MRLNTLSPSLGSRKNHKRLGRGIGSGFGKTAGRGHKGQKSRSGGHVNRGFE) is disordered. The segment covering 21-31 (RGIGSGFGKTA) has biased composition (gly residues).

It belongs to the universal ribosomal protein uL15 family. As to quaternary structure, part of the 50S ribosomal subunit.

Its function is as follows. Binds to the 23S rRNA. This is Large ribosomal subunit protein uL15 from Buchnera aphidicola subsp. Schizaphis graminum (strain Sg).